The sequence spans 447 residues: Chitobiosyldiphosphodolichol beta-mannosyltransferase (447 aa).

At 1–8 (MSVFGFDN) the chain is on the lumenal side. The chain crosses the membrane as a helical span at residues 9-29 (IPTWLWWLLAIYLATPFVLYV). Residues 30 to 127 (VQPYLFYEGK…LCSMFWKLRA (98 aa)) are Cytoplasmic-facing. Positions 128 to 148 (VDYILLQNPPTIPILPIAVVV) form an intramembrane region, helical. The Lumenal portion of the chain corresponds to 149 to 447 (KTFSRAKLII…ALSELKIIHK (299 aa)).

Belongs to the glycosyltransferase group 1 family.

Its subcellular location is the endoplasmic reticulum membrane. It catalyses the reaction an N,N'-diacetylchitobiosyl-diphospho-di-trans,poly-cis-dolichol + GDP-alpha-D-mannose = a beta-D-Man-(1-&gt;4)-beta-D-GlcNAc-(1-&gt;4)-alpha-D-GlcNAc-diphospho-di-trans,poly-cis-dolichol + GDP + H(+). It participates in protein modification; protein glycosylation. Participates in the formation of the lipid-linked precursor oligosaccharide for N-glycosylation. Involved in assembling the dolichol-pyrophosphate-GlcNAc(2)-Man(5) intermediate on the cytoplasmic surface of the ER. This chain is Chitobiosyldiphosphodolichol beta-mannosyltransferase (ALG1), found in Kluyveromyces lactis (strain ATCC 8585 / CBS 2359 / DSM 70799 / NBRC 1267 / NRRL Y-1140 / WM37) (Yeast).